The following is a 334-amino-acid chain: Ferrochelatase (334 aa).

2 residues coordinate Fe cation: histidine 207 and glutamate 288.

Belongs to the ferrochelatase family.

The protein resides in the cytoplasm. It carries out the reaction heme b + 2 H(+) = protoporphyrin IX + Fe(2+). It participates in porphyrin-containing compound metabolism; protoheme biosynthesis; protoheme from protoporphyrin-IX: step 1/1. Its function is as follows. Catalyzes the ferrous insertion into protoporphyrin IX. The polypeptide is Ferrochelatase (Helicobacter pylori (strain ATCC 700392 / 26695) (Campylobacter pylori)).